A 70-amino-acid chain; its full sequence is Gas vesicle protein A (70 aa).

It belongs to the gas vesicle GvpA family. The gas vesicle shell is 2 nm thick and consists of a single layer of this protein. It forms helical ribs nearly perpendicular to the long axis of the vesicle.

The protein localises to the gas vesicle shell. Its function is as follows. Gas vesicles are hollow, gas filled proteinaceous nanostructures found in some microorganisms. During planktonic growth they allow positioning of the organism at a favorable depth for light or nutrient acquisition. GvpA forms the protein shell. In Cereibacter sphaeroides (strain ATCC 17023 / DSM 158 / JCM 6121 / CCUG 31486 / LMG 2827 / NBRC 12203 / NCIMB 8253 / ATH 2.4.1.) (Rhodobacter sphaeroides), this protein is Gas vesicle protein A.